Reading from the N-terminus, the 213-residue chain is Probable nicotinate-nucleotide adenylyltransferase (213 aa).

The protein belongs to the NadD family.

The enzyme catalyses nicotinate beta-D-ribonucleotide + ATP + H(+) = deamido-NAD(+) + diphosphate. It participates in cofactor biosynthesis; NAD(+) biosynthesis; deamido-NAD(+) from nicotinate D-ribonucleotide: step 1/1. Its function is as follows. Catalyzes the reversible adenylation of nicotinate mononucleotide (NaMN) to nicotinic acid adenine dinucleotide (NaAD). In Escherichia coli O17:K52:H18 (strain UMN026 / ExPEC), this protein is Probable nicotinate-nucleotide adenylyltransferase.